A 595-amino-acid polypeptide reads, in one-letter code: Probable hydrolase M10 (595 aa).

An N-terminal signal peptide occupies residues 1–23; that stretch reads MRFTSTILLRVAVLLSLGGGSQT. N-linked (GlcNAc...) asparagine glycans are attached at residues Asn59, Asn87, Asn266, Asn436, Asn457, and Asn561.

The protein belongs to the beta-lactamase family.

The protein operates within secondary metabolite biosynthesis. Probable hydrolase; part of the gene cluster that mediates the biosynthesis of squalestatin S1 (SQS1, also known as zaragozic acid A), a heavily oxidized fungal polyketide that offers potent cholesterol lowering activity by targeting squalene synthase (SS). SQS1 is composed of a 2,8-dioxobicyclic[3.2.1]octane-3,4,5-tricarboxyclic acid core that is connected to two lipophilic polyketide arms. These initial steps feature the priming of an unusual benzoic acid starter unit onto the highly reducing polyketide synthase pks2, followed by oxaloacetate extension and product release to generate a tricarboxylic acid containing product. The phenylalanine ammonia lyase (PAL) M7 and the acyl-CoA ligase M9 are involved in transforming phenylalanine into benzoyl-CoA. The citrate synthase-like protein R3 is involved in connecting the C-alpha-carbons of the hexaketide chain and oxaloacetate to afford the tricarboxylic acid unit. The potential hydrolytic enzymes, M8 and M10, are in close proximity to pks2 and may participate in product release. On the other side, the tetraketide arm is synthesized by a the squalestatin tetraketide synthase pks1 and enzymatically esterified to the core in the last biosynthetic step, by the acetyltransferase M4. The biosynthesis of the tetraketide must involve 3 rounds of chain extension. After the first and second rounds methyl-transfer occurs, and in all rounds of extension the ketoreductase and dehydratase are active. The enoyl reductase and C-MeT of pks1 are not active in the final round of extension. The acetyltransferase M4 appears to have a broad substrate selectivity for its acyl CoA substrate, allowing the in vitro synthesis of novel squalestatins. The biosynthesis of SQS1 requires several oxidative steps likely performed by oxidoreductases M1, R1 and R2. Finally, in support of the identification of the cluster as being responsible for SQS1 production, the cluster contains a gene encoding a putative squalene synthase (SS) R6, suggesting a likely mechanism for self-resistance. This chain is Probable hydrolase M10, found in Phoma sp. (strain ATCC 20986 / MF5453).